Here is a 156-residue protein sequence, read N- to C-terminus: Transcriptional repressor NrdR (156 aa).

Residues 3 to 34 (CPYCRHPDSRVVDSREAEEGAAIRRRRSCPNC) fold into a zinc finger. The ATP-cone domain maps to 46–136 (LSVVKRSGVT…VYRSFTSAED (91 aa)).

The protein belongs to the NrdR family. Requires Zn(2+) as cofactor.

Its function is as follows. Negatively regulates transcription of bacterial ribonucleotide reductase nrd genes and operons by binding to NrdR-boxes. This Nocardia farcinica (strain IFM 10152) protein is Transcriptional repressor NrdR.